The sequence spans 209 residues: ADP-ribose pyrophosphatase (209 aa).

Residues phenylalanine 28–phenylalanine 29, arginine 51–glutamate 52, arginine 56, and arginine 79 each bind substrate. In terms of domain architecture, Nudix hydrolase spans glutamate 55 to alanine 193. Residue alanine 96 coordinates Mg(2+). The Nudix box motif lies at glycine 97–glycine 118. Methionine 98 is a binding site for substrate. Mg(2+)-binding residues include glutamate 112 and glutamate 116. Substrate contacts are provided by residues serine 133–glycine 135 and glutamate 139. Catalysis depends on glutamate 162, which acts as the Proton acceptor. Glutamate 164 is a binding site for Mg(2+).

Belongs to the Nudix hydrolase family. NudF subfamily. In terms of assembly, homodimer. It depends on Mg(2+) as a cofactor.

The enzyme catalyses ADP-D-ribose + H2O = D-ribose 5-phosphate + AMP + 2 H(+). Inhibited by phosphorylated compounds such as AMP, ADP, ATP, 3-phosphoglyceric acid and PPi. Not inhibited by orthophosphate. Activity is high in cells grown in low glucose concentrations and decreases dramatically as glucose concentration increases. Functionally, acts on ADP-mannose and ADP-glucose as well as ADP-ribose. Prevents glycogen biosynthesis. The reaction catalyzed by this enzyme is a limiting step of the gluconeogenic process. The polypeptide is ADP-ribose pyrophosphatase (nudF) (Escherichia coli O157:H7).